The chain runs to 512 residues: Mannose-1-phosphate guanylyltransferase (512 aa).

This sequence belongs to the mannose-6-phosphate isomerase type 2 family.

The catalysed reaction is alpha-D-mannose 1-phosphate + GTP + H(+) = GDP-alpha-D-mannose + diphosphate. This Sinorhizobium fredii (strain NBRC 101917 / NGR234) protein is Mannose-1-phosphate guanylyltransferase (noeJ).